A 98-amino-acid polypeptide reads, in one-letter code: NADH-ubiquinone oxidoreductase chain 4L (98 aa).

3 helical membrane passes run 1–21 (MTAI…GVLV), 29–49 (TLLC…LLIT), and 59–79 (LPLT…ALLV).

This sequence belongs to the complex I subunit 4L family. In terms of assembly, core subunit of respiratory chain NADH dehydrogenase (Complex I) which is composed of 45 different subunits.

It is found in the mitochondrion inner membrane. The catalysed reaction is a ubiquinone + NADH + 5 H(+)(in) = a ubiquinol + NAD(+) + 4 H(+)(out). Its function is as follows. Core subunit of the mitochondrial membrane respiratory chain NADH dehydrogenase (Complex I) which catalyzes electron transfer from NADH through the respiratory chain, using ubiquinone as an electron acceptor. Part of the enzyme membrane arm which is embedded in the lipid bilayer and involved in proton translocation. In Notoryctes typhlops (Southern marsupial mole), this protein is NADH-ubiquinone oxidoreductase chain 4L (MT-ND4L).